The following is a 555-amino-acid chain: MQPTSTTTKHIFVTGGVASSLGKGLTASSLGALLKARGLRVTMQKLDPYLNVDPGTMNPFQHGEVFVTNDGAETDLDIGHYERFLDVDLDGSANVTTGQVYSQVIAKERRGEYLGDTVQVIPHITNEIKHRIRRMAAEDVDVVITEVGGTVGDIESLPFLETVRQVRHEVGRDNVFVVHISLLPYIGPSGELKTKPTQHSVAALRNIGIQPDAIVLRADREVPTAIKRKISLMCDVDETAVVACPDARSIYDIPKVLHTEGLDAYVVRKLDLPFRDVDWTTWDDLLDRVHNPDHEVTVALVGKYIDLPDAYLSVTEAIRAGGFANKARVKVKWVTSDDCRTAAGAAEHLGDVDAICIPGGFGERGVDGKVGAIRYARENKVPLLGLCLGLQCIVIEAARSLAEIPDANSTEFDAATSHPVISTMEEQLAYVEGAGDLGGTMRLGLYPAKLAEGSLVREAYDGQPYVEERHRHRYEVNNAYRSELEKKAGLVFSGTSPDNKLVEYVEYPRETHPYLVATQAHPELRSRPTRPHPLFAGLVKAAVARQVAAAKGADA.

The interval 1–272 is amidoligase domain; that stretch reads MQPTSTTTKH…DAYVVRKLDL (272 aa). A CTP-binding site is contributed by Ser-19. Ser-19 provides a ligand contact to UTP. ATP is bound by residues 20–25 and Asp-77; that span reads SLGKGL. Mg(2+) contacts are provided by Asp-77 and Glu-146. Residues 153-155, 193-198, and Lys-229 each bind CTP; these read DIE and KTKPTQ. Residues 193-198 and Lys-229 contribute to the UTP site; that span reads KTKPTQ. Residues 297-548 enclose the Glutamine amidotransferase type-1 domain; that stretch reads TVALVGKYID…VKAAVARQVA (252 aa). Gly-360 is an L-glutamine binding site. The active-site Nucleophile; for glutamine hydrolysis is Cys-387. Residues 388-391, Glu-411, and Arg-473 contribute to the L-glutamine site; that span reads LGLQ. Residues His-521 and Glu-523 contribute to the active site.

The protein belongs to the CTP synthase family. In terms of assembly, homotetramer.

It catalyses the reaction UTP + L-glutamine + ATP + H2O = CTP + L-glutamate + ADP + phosphate + 2 H(+). It carries out the reaction L-glutamine + H2O = L-glutamate + NH4(+). The catalysed reaction is UTP + NH4(+) + ATP = CTP + ADP + phosphate + 2 H(+). It participates in pyrimidine metabolism; CTP biosynthesis via de novo pathway; CTP from UDP: step 2/2. Allosterically activated by GTP, when glutamine is the substrate; GTP has no effect on the reaction when ammonia is the substrate. The allosteric effector GTP functions by stabilizing the protein conformation that binds the tetrahedral intermediate(s) formed during glutamine hydrolysis. Inhibited by the product CTP, via allosteric rather than competitive inhibition. Catalyzes the ATP-dependent amination of UTP to CTP with either L-glutamine or ammonia as the source of nitrogen. Regulates intracellular CTP levels through interactions with the four ribonucleotide triphosphates. The protein is CTP synthase of Streptomyces griseus subsp. griseus (strain JCM 4626 / CBS 651.72 / NBRC 13350 / KCC S-0626 / ISP 5235).